We begin with the raw amino-acid sequence, 470 residues long: Sorting nexin-17 (470 aa).

One can recognise a PX domain in the interval 1-109 (MHFSIPETES…SFLRRAQQET (109 aa)). Positions 36, 38, 62, and 75 each coordinate a 1,2-diacyl-sn-glycero-3-phospho-(1D-myo-inositol-3-phosphate). Positions 115–206 (EEVSLEVLLS…YKIVLRKSYW (92 aa)) constitute a Ras-associating domain. Residues 115–432 (EEVSLEVLLS…DASRESMVKL (318 aa)) are FERM-like. The interval 270–432 (GYLRFDACVA…DASRESMVKL (163 aa)) is PTB-like F3 module. S336, S407, S409, S415, S421, S437, and S440 each carry phosphoserine. The tract at residues 400–426 (VGGTLRRSDSQQAVKSPPLLESPDASR) is disordered.

It belongs to the sorting nexin family. Monomer. Interacts with APP (via cytoplasmic YXNPXY motif). Interacts with KIF1B. Interacts with the C-termini of P-selectin, PTC, LDLR, VLDLR, LRP1 and LRP8. Interacts with KRIT1 (via N-terminus). Interacts with HRAS. Interacts with ITGB1 and ITGB5 (via NPxY motif). Interacts with CCDC22 and CCDC93; the interaction associates SNX17 with the CCC complex. Interacts (via C-terminus) with VPS26C and VPS35L; the interactions are direct and associate SNX17 with the retriever complex.

Its subcellular location is the cytoplasm. The protein resides in the early endosome. The protein localises to the cytoplasmic vesicle membrane. Functionally, critical regulator of endosomal recycling of numerous surface proteins, including integrins, signaling receptor and channels. Binds to NPxY sequences in the cytoplasmic tails of target cargos. Associates with retriever and CCC complexes to prevent lysosomal degradation and promote cell surface recycling of numerous cargos such as integrins ITGB1, ITGB5 and their associated alpha subunits. Also required for maintenance of normal cell surface levels of APP and LRP1. Interacts with membranes containing phosphatidylinositol 3-phosphate (PtdIns(3P)). This is Sorting nexin-17 (SNX17) from Bos taurus (Bovine).